The following is a 467-amino-acid chain: Chromosomal replication initiator protein DnaA (467 aa).

Positions 1–74 are domain I, interacts with DnaA modulators; that stretch reads MSADVWSQGC…ESVLSDLAGK (74 aa). A domain II region spans residues 74 to 130; that stretch reads KPVRLDLQLAAREAPPRPSSDAPRSNGHPQAAGQWLGAPSSSNAGAYTQASAPTPTH. The segment at 85 to 127 is disordered; that stretch reads REAPPRPSSDAPRSNGHPQAAGQWLGAPSSSNAGAYTQASAPT. The segment covering 112-127 has biased composition (polar residues); it reads PSSSNAGAYTQASAPT. Residues 131–347 are domain III, AAA+ region; the sequence is RLNTALTFDT…GALRKVLAYA (217 aa). Residues G175, G177, K178, and T179 each contribute to the ATP site. The segment at 348-467 is domain IV, binds dsDNA; the sequence is RFSQKDINIA…LHVLEQTLKG (120 aa).

This sequence belongs to the DnaA family. Oligomerizes as a right-handed, spiral filament on DNA at oriC.

The protein localises to the cytoplasm. Functionally, plays an essential role in the initiation and regulation of chromosomal replication. ATP-DnaA binds to the origin of replication (oriC) to initiate formation of the DNA replication initiation complex once per cell cycle. Binds the DnaA box (a 9 base pair repeat at the origin) and separates the double-stranded (ds)DNA. Forms a right-handed helical filament on oriC DNA; dsDNA binds to the exterior of the filament while single-stranded (ss)DNA is stabiized in the filament's interior. The ATP-DnaA-oriC complex binds and stabilizes one strand of the AT-rich DNA unwinding element (DUE), permitting loading of DNA polymerase. After initiation quickly degrades to an ADP-DnaA complex that is not apt for DNA replication. Binds acidic phospholipids. The polypeptide is Chromosomal replication initiator protein DnaA (Methylibium petroleiphilum (strain ATCC BAA-1232 / LMG 22953 / PM1)).